We begin with the raw amino-acid sequence, 255 residues long: Imidazole glycerol phosphate synthase subunit HisF (255 aa).

Residues D11 and D130 contribute to the active site.

It belongs to the HisA/HisF family. In terms of assembly, heterodimer of HisH and HisF.

It is found in the cytoplasm. The enzyme catalyses 5-[(5-phospho-1-deoxy-D-ribulos-1-ylimino)methylamino]-1-(5-phospho-beta-D-ribosyl)imidazole-4-carboxamide + L-glutamine = D-erythro-1-(imidazol-4-yl)glycerol 3-phosphate + 5-amino-1-(5-phospho-beta-D-ribosyl)imidazole-4-carboxamide + L-glutamate + H(+). It functions in the pathway amino-acid biosynthesis; L-histidine biosynthesis; L-histidine from 5-phospho-alpha-D-ribose 1-diphosphate: step 5/9. Its function is as follows. IGPS catalyzes the conversion of PRFAR and glutamine to IGP, AICAR and glutamate. The HisF subunit catalyzes the cyclization activity that produces IGP and AICAR from PRFAR using the ammonia provided by the HisH subunit. The chain is Imidazole glycerol phosphate synthase subunit HisF from Maricaulis maris (strain MCS10) (Caulobacter maris).